Here is a 333-residue protein sequence, read N- to C-terminus: L-lactate dehydrogenase A chain (333 aa).

NAD(+) is bound by residues 30–58 (GMVG…MEDK) and arginine 100. Arginine 107, asparagine 139, and arginine 170 together coordinate substrate. Asparagine 139 is an NAD(+) binding site. Histidine 194 serves as the catalytic Proton acceptor. Residue threonine 249 coordinates substrate.

The protein belongs to the LDH/MDH superfamily. LDH family. As to quaternary structure, homotetramer.

It is found in the cytoplasm. The catalysed reaction is (S)-lactate + NAD(+) = pyruvate + NADH + H(+). Its pathway is fermentation; pyruvate fermentation to lactate; (S)-lactate from pyruvate: step 1/1. In terms of biological role, interconverts simultaneously and stereospecifically pyruvate and lactate with concomitant interconversion of NADH and NAD(+). The chain is L-lactate dehydrogenase A chain (ldha) from Danio rerio (Zebrafish).